Reading from the N-terminus, the 499-residue chain is Probable cytosol aminopeptidase (499 aa).

Mn(2+)-binding residues include lysine 271 and aspartate 276. The active site involves lysine 283. Residues aspartate 294, aspartate 353, and glutamate 355 each coordinate Mn(2+). The active site involves arginine 357.

The protein belongs to the peptidase M17 family. The cofactor is Mn(2+).

The protein localises to the cytoplasm. The catalysed reaction is Release of an N-terminal amino acid, Xaa-|-Yaa-, in which Xaa is preferably Leu, but may be other amino acids including Pro although not Arg or Lys, and Yaa may be Pro. Amino acid amides and methyl esters are also readily hydrolyzed, but rates on arylamides are exceedingly low.. It carries out the reaction Release of an N-terminal amino acid, preferentially leucine, but not glutamic or aspartic acids.. In terms of biological role, presumably involved in the processing and regular turnover of intracellular proteins. Catalyzes the removal of unsubstituted N-terminal amino acids from various peptides. The sequence is that of Probable cytosol aminopeptidase from Bordetella parapertussis (strain 12822 / ATCC BAA-587 / NCTC 13253).